The following is a 558-amino-acid chain: NXPE family member 2 (558 aa).

The helical transmembrane segment at 17–37 (ASARKLFLIVLIIFVFWVVFM) threads the bilayer.

It belongs to the NXPE family.

Its subcellular location is the membrane. This is NXPE family member 2 (Nxpe2) from Mus musculus (Mouse).